Reading from the N-terminus, the 477-residue chain is Tripartite motif-containing protein 72 (477 aa).

Residues Leu-14, Pro-17, Pro-29, Cys-31, Thr-34, Gln-37, Thr-53, Pro-56, Gly-86, Leu-89, Val-97, Glu-100, Leu-105, Gly-108, Gly-114, and Lys-117 each contribute to the Zn(2+) site. Residues 16-59 (CPLCLELFRAPVTPECGHTFCQGCLTGAPKNQDQNGSTPCPTCQ) form an RING-type zinc finger. The B box-type zinc finger occupies 83-124 (VPKGHCLEHLDPLSVYCEQDKELICGVCASLGKHKGHNIITA). Positions 135 to 232 (LPQQQVILQE…QMDGVLKDVE (98 aa)) form a coiled coil. Residues 272-476 (DEFKFQVWRK…LKIFYPPAEQ (205 aa)) form the B30.2/SPRY domain.

This sequence belongs to the TRIM/RBCC family. Homodimer. Homooligomer; disulfide-linked. Oligomerizes on the phospholipid membrane. In terms of processing, disulfide bond formation at Cys-244 occurs in case of membrane damage that cause the entry of the oxidized milieu of the extracellular space, resulting in homooligomerization.

The protein resides in the cell membrane. It localises to the sarcolemma. Its subcellular location is the cytoplasmic vesicle membrane. The catalysed reaction is S-ubiquitinyl-[E2 ubiquitin-conjugating enzyme]-L-cysteine + [acceptor protein]-L-lysine = [E2 ubiquitin-conjugating enzyme]-L-cysteine + N(6)-ubiquitinyl-[acceptor protein]-L-lysine.. It functions in the pathway protein modification; protein ubiquitination. With respect to regulation, specifically binds phosphatidylserine. The binding to phospholipids enhances ubiquitination activity. Functionally, muscle-specific E3 ubiquitin-protein ligase that plays a central role in cell membrane repair by nucleating the assembly of the repair machinery at injury sites. Acts as a sensor of oxidation: upon membrane damage, entry of extracellular oxidative environment results in disulfide bond formation and homooligomerization at the injury site. This oligomerization acts as a nucleation site for recruitment of TRIM72-containing vesicles to the injury site, leading to membrane patch formation. Probably acts upstream of the Ca(2+)-dependent membrane resealing process. Required for transport of DYSF to sites of cell injury during repair patch formation. Regulates membrane budding and exocytosis. May be involved in the regulation of the mobility of KCNB1-containing endocytic vesicles. This Xenopus tropicalis (Western clawed frog) protein is Tripartite motif-containing protein 72 (trim72).